A 35-amino-acid chain; its full sequence is Photosystem II reaction center protein T (35 aa).

A helical membrane pass occupies residues 3-23; it reads AFAYTLLMTLVVATLFFAVAF.

This sequence belongs to the PsbT family. As to quaternary structure, PSII is composed of 1 copy each of membrane proteins PsbA, PsbB, PsbC, PsbD, PsbE, PsbF, PsbH, PsbI, PsbJ, PsbK, PsbL, PsbM, PsbT, PsbX, PsbY, Psb30/Ycf12, peripheral proteins PsbO, CyanoQ (PsbQ), PsbU, PsbV and a large number of cofactors. It forms dimeric complexes.

It localises to the cellular thylakoid membrane. Functionally, found at the monomer-monomer interface of the photosystem II (PS II) dimer, plays a role in assembly and dimerization of PSII. PSII is a light-driven water plastoquinone oxidoreductase, using light energy to abstract electrons from H(2)O, generating a proton gradient subsequently used for ATP formation. This Prochlorococcus marinus (strain MIT 9303) protein is Photosystem II reaction center protein T.